We begin with the raw amino-acid sequence, 651 residues long: Probable potassium transport system protein Kup (651 aa).

The next 12 helical transmembrane spans lie at 41–61 (LVLG…IYAF), 82–102 (VVSL…VLFV), 130–150 (LILG…VITP), 163–183 (IVAP…LVTL), 194–214 (VAIV…ASGL), 235–255 (FLTV…LAMT), 276–296 (WLWI…AFIL), 309–329 (MIPS…TVIA), 366–386 (IYIP…VLGF), 395–415 (AYGI…YIVM), 426–446 (ALPI…ANII), and 450–470 (EGGW…WTWV).

It belongs to the HAK/KUP transporter (TC 2.A.72) family.

Its subcellular location is the cell inner membrane. It catalyses the reaction K(+)(in) + H(+)(in) = K(+)(out) + H(+)(out). Transport of potassium into the cell. Likely operates as a K(+):H(+) symporter. This Brucella melitensis biotype 2 (strain ATCC 23457) protein is Probable potassium transport system protein Kup.